Consider the following 102-residue polypeptide: NADH-quinone oxidoreductase subunit K 2 (102 aa).

The next 3 membrane-spanning stretches (helical) occupy residues 4–24 (ITPV…TVGV), 30–50 (IVII…NLIA), and 62–82 (IFAI…LGIL).

The protein belongs to the complex I subunit 4L family. As to quaternary structure, NDH-1 is composed of 14 different subunits. Subunits NuoA, H, J, K, L, M, N constitute the membrane sector of the complex.

The protein localises to the cell inner membrane. It carries out the reaction a quinone + NADH + 5 H(+)(in) = a quinol + NAD(+) + 4 H(+)(out). In terms of biological role, NDH-1 shuttles electrons from NADH, via FMN and iron-sulfur (Fe-S) centers, to quinones in the respiratory chain. The immediate electron acceptor for the enzyme in this species is believed to be ubiquinone. Couples the redox reaction to proton translocation (for every two electrons transferred, four hydrogen ions are translocated across the cytoplasmic membrane), and thus conserves the redox energy in a proton gradient. This is NADH-quinone oxidoreductase subunit K 2 from Solibacter usitatus (strain Ellin6076).